We begin with the raw amino-acid sequence, 445 residues long: Sporulation protein YkvU (445 aa).

A run of 12 helical transmembrane segments spans residues 7 to 29 (GIIL…NMIL), 39 to 61 (GLYM…ELPI), 82 to 104 (AFRM…LPFI), 109 to 131 (TYHP…TSIA), 144 to 166 (IAIA…FQWY), 172 to 194 (MAVL…YLYS), 237 to 259 (VNAI…GTAA), 269 to 291 (VAVT…MIPS), 312 to 334 (IFIT…GPLT), 349 to 371 (LLWP…IGMG), 376 to 395 (AFYH…YVLG), and 400 to 422 (LQML…LHYA).

The protein resides in the forespore membrane. This Bacillus subtilis (strain 168) protein is Sporulation protein YkvU (ykvU).